Here is a 695-residue protein sequence, read N- to C-terminus: Amphiphysin (695 aa).

Coiled-coil stretches lie at residues 10–83 and 144–191; these read AKNV…SLHE and DYDS…QEEL. The BAR domain occupies 24–240; that stretch reads VLQKLGKADE…MTKLGDQHAD (217 aa). 2 disordered regions span residues 244-312 and 486-617; these read TIQG…VTPT and GAPG…EASQ. Ser-252 carries the phosphoserine modification. The residue at position 260 (Thr-260) is a Phosphothreonine. The span at 261–274 shows a compositional bias: pro residues; that stretch reads PSPPEEPSPLPSPT. Residues Ser-262, Ser-268, Ser-272, and Ser-276 each carry the phosphoserine modification. At Thr-280 the chain carries Phosphothreonine. Phosphoserine occurs at positions 506 and 638. The region spanning 622–695 is the SH3 domain; it reads GFLYKVETLH…FPENFTRRLD (74 aa).

As to quaternary structure, heterodimer with BIN1. Binds SH3GLB1. Interacts with REPS1 and SGIP1. Binds AP2A2. Interacts with AP2B1. Interacts with DNM1 and SYNJ1. As to expression, neurons, certain endocrine cell types and spermatocytes.

Its subcellular location is the cytoplasmic vesicle. The protein resides in the secretory vesicle. It localises to the synaptic vesicle membrane. The protein localises to the cytoplasm. It is found in the cytoskeleton. Functionally, may participate in mechanisms of regulated exocytosis in synapses and certain endocrine cell types. May control the properties of the membrane associated cytoskeleton. The sequence is that of Amphiphysin (AMPH) from Homo sapiens (Human).